We begin with the raw amino-acid sequence, 447 residues long: Methyl-coenzyme M reductase I subunit beta (447 aa).

Tyr-371 is a binding site for coenzyme M. Gly-373 lines the coenzyme B pocket.

Belongs to the methyl-coenzyme M reductase beta subunit family. MCR is a hexamer of two alpha, two beta, and two gamma chains, forming a dimer of heterotrimers. It depends on coenzyme F430 as a cofactor.

The protein localises to the cytoplasm. It carries out the reaction coenzyme B + methyl-coenzyme M = methane + coenzyme M-coenzyme B heterodisulfide. Its pathway is one-carbon metabolism; methyl-coenzyme M reduction; methane from methyl-coenzyme M: step 1/1. Functionally, component of the methyl-coenzyme M reductase (MCR) I that catalyzes the reductive cleavage of methyl-coenzyme M (CoM-S-CH3 or 2-(methylthio)ethanesulfonate) using coenzyme B (CoB or 7-mercaptoheptanoylthreonine phosphate) as reductant which results in the production of methane and the mixed heterodisulfide of CoB and CoM (CoM-S-S-CoB). This is the final step in methanogenesis. The chain is Methyl-coenzyme M reductase I subunit beta (mcrB) from Methanocaldococcus jannaschii (strain ATCC 43067 / DSM 2661 / JAL-1 / JCM 10045 / NBRC 100440) (Methanococcus jannaschii).